Consider the following 586-residue polypeptide: Kelch-like protein 7 (586 aa).

Positions cysteine 44–serine 111 constitute a BTB domain. One can recognise a BACK domain in the interval cysteine 146–glutamine 248. Kelch repeat units follow at residues arginine 294 to asparagine 336, valine 337 to glycine 382, lysine 383 to glycine 430, leucine 431 to aspartate 481, isoleucine 483 to serine 528, and isoleucine 530 to aspartate 575.

In terms of assembly, homodimer. Component of the BCR(KLHL7) E3 ubiquitin ligase complex, at least composed of CUL3 and KLHL7 and RBX1.

It localises to the nucleus. Its subcellular location is the cytoplasm. It participates in protein modification; protein ubiquitination. Its function is as follows. Substrate-specific adapter of a BCR (BTB-CUL3-RBX1) E3 ubiquitin ligase complex. The BCR(KLHL7) complex acts by mediating ubiquitination and subsequent degradation of substrate proteins. Probably mediates 'Lys-48'-linked ubiquitination. This chain is Kelch-like protein 7 (Klhl7), found in Mus musculus (Mouse).